Here is a 310-residue protein sequence, read N- to C-terminus: Protein-methionine-sulfoxide reductase catalytic subunit MsrP (310 aa).

The segment at residues 1 to 45 (MRKTSSPRIAPSEITPRDLYHDRRRFMQAAAGAAAAALWPHWLSA) is a signal peptide (tat-type signal). Residues N73, 76 to 77 (YE), C131, T166, N214, R219, and 230 to 232 (SAK) each bind Mo-molybdopterin.

This sequence belongs to the MsrP family. In terms of assembly, heterodimer of a catalytic subunit (MsrP) and a heme-binding subunit (MsrQ). The cofactor is Mo-molybdopterin. In terms of processing, predicted to be exported by the Tat system. The position of the signal peptide cleavage has not been experimentally proven.

The protein localises to the periplasm. The enzyme catalyses L-methionyl-[protein] + a quinone + H2O = L-methionyl-(S)-S-oxide-[protein] + a quinol. It carries out the reaction L-methionyl-[protein] + a quinone + H2O = L-methionyl-(R)-S-oxide-[protein] + a quinol. Its function is as follows. Part of the MsrPQ system that repairs oxidized periplasmic proteins containing methionine sulfoxide residues (Met-O), using respiratory chain electrons. Thus protects these proteins from oxidative-stress damage caused by reactive species of oxygen and chlorine generated by the host defense mechanisms. MsrPQ is essential for the maintenance of envelope integrity under bleach stress, rescuing a wide series of structurally unrelated periplasmic proteins from methionine oxidation. The catalytic subunit MsrP is non-stereospecific, being able to reduce both (R-) and (S-) diastereoisomers of methionine sulfoxide. This Methylococcus capsulatus (strain ATCC 33009 / NCIMB 11132 / Bath) protein is Protein-methionine-sulfoxide reductase catalytic subunit MsrP.